The chain runs to 1255 residues: Cilia- and flagella-associated protein 337 B (1255 aa).

The region spanning 87–122 (KLVRCLTNLFEEIDLNGNGILEWDEFTNYVIEKATV) is the EF-hand domain. Positions 100, 102, 104, and 111 each coordinate Ca(2+). WD repeat units follow at residues 228–269 (DLKT…WVLA), 282–322 (EFKN…KELE), 326–365 (AHTE…KKRV), 368–407 (EHTR…LIYK), 410–449 (GHSS…NVQC), 496–536 (VDDY…KIFS), 538–577 (VTQG…MIKA), 580–624 (KHSA…RTLE), 625–664 (LKDV…QNGS), 669–708 (TQYE…FKFQ), 769–808 (QQNL…TILE), and 844–883 (AHYE…LIDQ). 2 disordered regions span residues 941–988 (IKSL…NFNP) and 1140–1160 (QQQV…QQPG). Residues 953 to 969 (TQESSTQEQEAAQQPQQ) show a composition bias toward low complexity. A compositionally biased stretch (polar residues) spans 1148 to 1160 (TEPSSNRSHQQPG).

The protein belongs to the CFAP337 family. As to quaternary structure, associates with components of the nexin-dynein regulatory complex (N-DRC) and the CFAP184:CFAP263 complex.

It localises to the cell projection. Its subcellular location is the cilium. Functionally, associates with components of the nexin-dynein regulatory complex (N-DRC), a key regulator of ciliary/flagellar motility, and might act as an inner dynein arm (IDA) hub or linkage. The chain is Cilia- and flagella-associated protein 337 B from Tetrahymena thermophila (strain SB210).